The primary structure comprises 2368 residues: Highly reducing polyketide synthase cla2 (2368 aa).

The Ketosynthase family 3 (KS3) domain maps to 10-434 (QIPIAIVGLG…GTNGLVVLEA (425 aa)). Active-site for beta-ketoacyl synthase activity residues include Cys-182, His-317, and His-357. Residues 548–877 (FVFTGQGAQW…RGQNALDTSL (330 aa)) are malonyl-CoA:ACP transacylase (MAT) domain. Ser-638 functions as the For malonyltransferase activity in the catalytic mechanism. An N-terminal hotdog fold region spans residues 936–1071 (HSMIGLKQPM…GLVAIEYTNK (136 aa)). The tract at residues 936 to 1175 (HSMIGLKQPM…AIFQSIFGST (240 aa)) is dehydratase (DH) domain. Residues 936 to 1255 (HSMIGLKQPM…MTEPEVGDDA (320 aa)) form the PKS/mFAS DH domain. His-968 serves as the catalytic Proton acceptor; for dehydratase activity. The C-terminal hotdog fold stretch occupies residues 1099-1255 (PLMIRREKFY…MTEPEVGDDA (157 aa)). Asp-1165 serves as the catalytic Proton donor; for dehydratase activity. The interval 1655 to 1967 (GFLDSLQFIK…QGKHRGKLVL (313 aa)) is enoylreductase (ER) domain. Residues 1991-2170 (ATYLIIGGLG…AVAVNLTIIR (180 aa)) form a catalytic ketoreductase (KRc) domain region. A Carrier domain is found at 2283–2360 (QASEIITEGL…VLAKTIASRS (78 aa)). Ser-2320 bears the O-(pantetheine 4'-phosphoryl)serine mark.

Its pathway is secondary metabolite biosynthesis. Highly reducing polyketide synthase; part of the gene cluster that mediates the biosynthesis of cladosporin, a tricyclic octaketide that acts as an antimalarial agent though inhibition of the Plasmodium falciparum lysyl-tRNA synthetase. The highly reducing polyketide synthase cla2 is responsible for biosynthesis up to the pentaketide stage, including of the tetrahydropyran (THP) ring, whereas the three subsequent ketide extensions with no reduction are catalyzed by the non-reducing polyketide synthase cla3. The chain is Highly reducing polyketide synthase cla2 from Cladosporium cladosporioides.